We begin with the raw amino-acid sequence, 50 residues long: Large ribosomal subunit protein bL33 (50 aa).

It belongs to the bacterial ribosomal protein bL33 family.

The polypeptide is Large ribosomal subunit protein bL33 (Endomicrobium trichonymphae).